Consider the following 210-residue polypeptide: LexA repressor (210 aa).

Positions 31-51 (RVEISKELGFRSPNAAEEHLK) form a DNA-binding region, H-T-H motif. Active-site for autocatalytic cleavage activity residues include Ser-126 and Lys-163.

It belongs to the peptidase S24 family. As to quaternary structure, homodimer.

It catalyses the reaction Hydrolysis of Ala-|-Gly bond in repressor LexA.. In terms of biological role, represses a number of genes involved in the response to DNA damage (SOS response), including recA and lexA. In the presence of single-stranded DNA, RecA interacts with LexA causing an autocatalytic cleavage which disrupts the DNA-binding part of LexA, leading to derepression of the SOS regulon and eventually DNA repair. This chain is LexA repressor, found in Histophilus somni (strain 129Pt) (Haemophilus somnus).